The sequence spans 535 residues: Cytochrome c oxidase subunit 1 (535 aa).

A helical membrane pass occupies residues 15-37 (IAILYFIFSTFCGLAGTAMSFII). Residues glutamate 40, alanine 43, and glycine 45 each contribute to the Ca(2+) site. 5 consecutive transmembrane segments (helical) span residues 58 to 80 (VLVT…IGGF), 147 to 169 (LAIF…FIVT), 190 to 212 (ILIT…TMLL), 238 to 260 (WFFG…SHIV), and 267 to 289 (PVFG…FLVW). Residue histidine 63 coordinates Fe(II)-heme a. Histidine 242 contributes to the Cu cation binding site. The segment at residues 242–246 (HPEVY) is a cross-link (1'-histidyl-3'-tyrosine (His-Tyr)). Tyrosine 246 serves as a coordination point for O2. Residues histidine 291 and histidine 292 each coordinate Cu cation. The next 2 helical transmembrane spans lie at 304-326 (AYFT…SWLT) and 339-361 (MLYT…VLAN). Residues histidine 369 and aspartate 370 each contribute to the Mg(2+) site. 2 consecutive transmembrane segments (helical) span residues 376–398 (THFH…YYWS) and 415–437 (FWLI…INGM). Histidine 377 serves as a coordination point for heme a3. Fe(II)-heme a is bound at residue histidine 379. Proline 442 is a Ca(2+) binding site. The chain crosses the membrane as a helical span at residues 452–474 (NLVSSFGSMMTIMSLMLFTYIIY).

The protein belongs to the heme-copper respiratory oxidase family. As to quaternary structure, component of the cytochrome c oxidase (complex IV, CIV), a multisubunit enzyme composed of a catalytic core of 3 subunits and several supernumerary subunits. The complex exists as a monomer or a dimer and forms supercomplexes (SCs) in the inner mitochondrial membrane with ubiquinol-cytochrome c oxidoreductase (cytochrome b-c1 complex, complex III, CIII). Requires heme as cofactor. The cofactor is Cu cation.

It localises to the mitochondrion inner membrane. It carries out the reaction 4 Fe(II)-[cytochrome c] + O2 + 8 H(+)(in) = 4 Fe(III)-[cytochrome c] + 2 H2O + 4 H(+)(out). It participates in energy metabolism; oxidative phosphorylation. Its function is as follows. Component of the cytochrome c oxidase, the last enzyme in the mitochondrial electron transport chain which drives oxidative phosphorylation. The respiratory chain contains 3 multisubunit complexes succinate dehydrogenase (complex II, CII), ubiquinol-cytochrome c oxidoreductase (cytochrome b-c1 complex, complex III, CIII) and cytochrome c oxidase (complex IV, CIV), that cooperate to transfer electrons derived from NADH and succinate to molecular oxygen, creating an electrochemical gradient over the inner membrane that drives transmembrane transport and the ATP synthase. Cytochrome c oxidase is the component of the respiratory chain that catalyzes the reduction of oxygen to water. Electrons originating from reduced cytochrome c in the intermembrane space (IMS) are transferred via the dinuclear copper A center (CU(A)) of subunit 2 and heme A of subunit 1 to the active site in subunit 1, a binuclear center (BNC) formed by heme A3 and copper B (CU(B)). The BNC reduces molecular oxygen to 2 water molecules using 4 electrons from cytochrome c in the IMS and 4 protons from the mitochondrial matrix. This is Cytochrome c oxidase subunit 1 (COX1) from Eremothecium gossypii (strain ATCC 10895 / CBS 109.51 / FGSC 9923 / NRRL Y-1056) (Yeast).